The sequence spans 344 residues: Mycothiol acetyltransferase (344 aa).

Glu-36 contacts 1D-myo-inositol 2-(L-cysteinylamino)-2-deoxy-alpha-D-glucopyranoside. N-acetyltransferase domains follow at residues 40–179 and 187–344; these read LALR…TPLP and VTVR…PSTG. The tract at residues 61–83 is disordered; the sequence is ADTSGPNVPDTPGDQNAADTSTM. Over residues 73-83 the composition is skewed to polar residues; that stretch reads GDQNAADTSTM. 109-111 serves as a coordination point for acetyl-CoA; the sequence is VVV. 1D-myo-inositol 2-(L-cysteinylamino)-2-deoxy-alpha-D-glucopyranoside-binding residues include Glu-214, Lys-253, and Glu-272. Residues 276–278 and 283–289 each bind acetyl-CoA; these read VGV and GGAGLGR. Position 310 (Tyr-310) interacts with 1D-myo-inositol 2-(L-cysteinylamino)-2-deoxy-alpha-D-glucopyranoside. 315–320 serves as a coordination point for acetyl-CoA; that stretch reads NVRAVR.

This sequence belongs to the acetyltransferase family. MshD subfamily. In terms of assembly, monomer.

It catalyses the reaction 1D-myo-inositol 2-(L-cysteinylamino)-2-deoxy-alpha-D-glucopyranoside + acetyl-CoA = mycothiol + CoA + H(+). Catalyzes the transfer of acetyl from acetyl-CoA to desacetylmycothiol (Cys-GlcN-Ins) to form mycothiol. The protein is Mycothiol acetyltransferase of Frankia casuarinae (strain DSM 45818 / CECT 9043 / HFP020203 / CcI3).